The sequence spans 698 residues: Dynein regulatory complex protein 1 (698 aa).

2 stretches are compositionally biased toward basic and acidic residues: residues 27 to 47 (ALREGDHGGGKEGENKEEIGK) and 76 to 90 (AGDDRENQHRIQEEQ). Disordered regions lie at residues 27–50 (ALREGDHGGGKEGENKEEIGKGKQ) and 71–90 (SSVRVAGDDRENQHRIQEEQ). Positions 183–367 (MSRQFVEVQN…DLQSKFRHFE (185 aa)) form a coiled coil. The interval 425-461 (SGGGAAAAATGGAAGGAAAAGGVGPNGEEESEEDAAA) is disordered. The span at 436–449 (GAAGGAAAAGGVGP) shows a compositional bias: gly residues. The stretch at 655–685 (QERAGSLRDVESLQHQNNELRALLNQYLSSR) forms a coiled coil.

This sequence belongs to the DRC1 family. Component of the nexin-dynein regulatory complex (N-DRC). Interacts with DRC4 and DRC5.

The protein localises to the cytoplasm. Its subcellular location is the cytoskeleton. It localises to the cilium axoneme. It is found in the flagellum axoneme. Component of the nexin-dynein regulatory complex (N-DRC) a key regulator of ciliary/flagellar motility which maintains the alignment and integrity of the distal axoneme and regulates microtubule sliding in motile axonemes. Plays a critical role in the assembly of N-DRC and also stabilizes the assembly of multiple inner dynein arms and radial spokes. Coassembles with DRC2 to form a central scaffold needed for assembly of the N-DRC and its attachment to the outer doublet microtubules. This Chlamydomonas reinhardtii (Chlamydomonas smithii) protein is Dynein regulatory complex protein 1 (DRC1).